The sequence spans 480 residues: Lysosomal protective protein (480 aa).

The first 28 residues, 1-28 (MIRAAPPPLFLLLLLLLLLVSWASRGEA), serve as a signal peptide directing secretion. Intrachain disulfides connect Cys-88-Cys-362, Cys-240-Cys-256, Cys-241-Cys-246, and Cys-281-Cys-331. Asn-145 carries an N-linked (GlcNAc...) asparagine glycan. Ser-178 is an active-site residue. Asn-333 carries N-linked (GlcNAc...) asparagine glycosylation. Active-site residues include Asp-400 and His-457.

It belongs to the peptidase S10 family. In terms of assembly, heterodimer of a 32 kDa chain and a 20 kDa chain; disulfide-linked.

The protein resides in the lysosome. The enzyme catalyses Release of a C-terminal amino acid with broad specificity.. Its function is as follows. Protective protein appears to be essential for both the activity of beta-galactosidase and neuraminidase, it associates with these enzymes and exerts a protective function necessary for their stability and activity. This protein is also a carboxypeptidase and can deamidate tachykinins. This Homo sapiens (Human) protein is Lysosomal protective protein (CTSA).